The sequence spans 1413 residues: Zinc finger SWIM domain-containing protein 8 (1413 aa).

Residues Ser-36, Ser-48, and Ser-53 each carry the phosphoserine modification. Residues 45–65 (RKQSAGPNSPTGGGGGGGSGG) form a disordered region. Over residues 55-65 (TGGGGGGGSGG) the composition is skewed to gly residues. An SWIM-type zinc finger spans residues 172–208 (YNVAVMFDRCRVTSCSCTCGAGAKWCTHVVALCLFRI). The tract at residues 600–817 (ESQTHKPQTL…ESHAPHVPNQ (218 aa)) is disordered. Polar residues predominate over residues 604–625 (HKPQTLSSFYSSSRPATASQRS). Residues 704–715 (SRGGYNGRGWGS) are compositionally biased toward gly residues. The residue at position 724 (Thr-724) is a Phosphothreonine. Positions 729–744 (IDSSAPETTSDSSPTL) are enriched in polar residues. Residues Ser-738, Ser-741, and Ser-745 each carry the phosphoserine modification. Over residues 759–794 (GRGQDSDSISSSSSDSLGSSSSSGSRRASASGGARA) the composition is skewed to low complexity. Residues 795–811 (KTVEVGRYKGRRPESHA) are compositionally biased toward basic and acidic residues. Phosphoserine occurs at positions 852 and 1412.

It belongs to the ZSWIM8 family. In terms of assembly, component of the SCF-like E3 ubiquitin-protein ligase complex which contains CUL3, RBX1, ELOB, ELOC and ZSWIM8. Interacts with DAB1.

It localises to the cytoplasm. The protein resides in the cytosol. It functions in the pathway protein modification; protein ubiquitination. Functionally, substrate recognition component of a SCF-like E3 ubiquitin-protein ligase complex that promotes target-directed microRNA degradation (TDMD), a process that mediates degradation of microRNAs (miRNAs). The SCF-like E3 ubiquitin-protein ligase complex acts by catalyzing ubiquitination and subsequent degradation of AGO proteins (AGO1, AGO2, AGO3 and/or AGO4), thereby exposing miRNAs for degradation. Specifically recognizes and binds AGO proteins when they are engaged with a TDMD target. May also acts as a regulator of axon guidance: specifically recognizes misfolded ROBO3 and promotes its ubiquitination and subsequent degradation. Plays an essential role for proper embryonic development of heart and lung. Controls protein quality of DAB1, a key signal molecule for brain development, thus protecting its signaling strength. Mechanistically, recognizes intrinsically disordered regions of DAB1 and eliminates misfolded DAB1 that cannot be properly phosphorylated. The sequence is that of Zinc finger SWIM domain-containing protein 8 from Bos taurus (Bovine).